The chain runs to 373 residues: tRNA-specific 2-thiouridylase MnmA (373 aa).

ATP is bound by residues 12–19 and Met-38; that span reads GMSGGVDS. Positions 98–100 are interaction with target base in tRNA; the sequence is NPD. Catalysis depends on Cys-103, which acts as the Nucleophile. A disulfide bond links Cys-103 and Cys-200. Position 127 (Gly-127) interacts with ATP. The interaction with tRNA stretch occupies residues 150 to 152; sequence KDQ. Cys-200 acts as the Cysteine persulfide intermediate in catalysis. The tract at residues 312-313 is interaction with tRNA; it reads RY.

Belongs to the MnmA/TRMU family.

The protein localises to the cytoplasm. It catalyses the reaction S-sulfanyl-L-cysteinyl-[protein] + uridine(34) in tRNA + AH2 + ATP = 2-thiouridine(34) in tRNA + L-cysteinyl-[protein] + A + AMP + diphosphate + H(+). Functionally, catalyzes the 2-thiolation of uridine at the wobble position (U34) of tRNA, leading to the formation of s(2)U34. This is tRNA-specific 2-thiouridylase MnmA from Streptococcus agalactiae serotype III (strain NEM316).